The sequence spans 72 residues: UPF0352 protein HI_0840 (72 aa).

It belongs to the UPF0352 family.

The polypeptide is UPF0352 protein HI_0840 (Haemophilus influenzae (strain ATCC 51907 / DSM 11121 / KW20 / Rd)).